Here is a 235-residue protein sequence, read N- to C-terminus: Small ribosomal subunit protein uS2c (235 aa).

This sequence belongs to the universal ribosomal protein uS2 family.

It localises to the plastid. The polypeptide is Small ribosomal subunit protein uS2c (rps2) (Euglena longa (Euglenophycean alga)).